A 157-amino-acid chain; its full sequence is Transcriptional repressor NrdR (157 aa).

Residues 3 to 34 (CPKCNSTHSRVVDSRHADEANAIRRRRECENC) fold into a zinc finger. Residues 49–139 (LIVVKKDGTR…VYKEFKDVDQ (91 aa)) enclose the ATP-cone domain.

Belongs to the NrdR family. The cofactor is Zn(2+).

Negatively regulates transcription of bacterial ribonucleotide reductase nrd genes and operons by binding to NrdR-boxes. The protein is Transcriptional repressor NrdR of Staphylococcus carnosus (strain TM300).